The sequence spans 257 residues: MRRLNFEKVVTRLVEFIKENAKQGVVIGISGGVDSATVAYLATKALGKDKILGLIMPYYENKDVEDAKLVAENLGIRYKIINIKPIVDTIQSSLDVALDRKSLGNIMARVRMVLLYSYANSLGRLVLGTSNRSEFLTGYFTKWGDGASDYAPLINIYKTEVWEVARIIGVPQSIVEKKPSAGLWEGQTDEDELGISYKLLDELLWRLVDLKMSKEEIANELNVSEEIVEHVEKLVKNSEHKRRLPIGPKVDDLIIEP.

Residue 28-35 coordinates ATP; that stretch reads GISGGVDS. Aspartate 34 provides a ligand contact to Mg(2+). A deamido-NAD(+)-binding site is contributed by arginine 109. Threonine 129 is an ATP binding site. Glutamate 134 provides a ligand contact to Mg(2+). Positions 142 and 149 each coordinate deamido-NAD(+). Residues lysine 158 and serine 180 each coordinate ATP. 240 to 241 lines the deamido-NAD(+) pocket; the sequence is HK.

Belongs to the NAD synthetase family. Homodimer.

It carries out the reaction deamido-NAD(+) + NH4(+) + ATP = AMP + diphosphate + NAD(+) + H(+). Its pathway is cofactor biosynthesis; NAD(+) biosynthesis; NAD(+) from deamido-NAD(+) (ammonia route): step 1/1. In terms of biological role, catalyzes the ATP-dependent amidation of deamido-NAD to form NAD. Uses ammonia as a nitrogen source. This Pyrococcus furiosus (strain ATCC 43587 / DSM 3638 / JCM 8422 / Vc1) protein is NH(3)-dependent NAD(+) synthetase.